Here is a 332-residue protein sequence, read N- to C-terminus: Cytoskeleton protein RodZ (332 aa).

Residues 1–111 (MNTETTQDTT…LKKSRKKRDG (111 aa)) lie on the Cytoplasmic side of the membrane. The HTH cro/C1-type domain occupies 19-71 (LREARERLGLTQQTIAERLCLKITTVRDIEDGTTPADLAPTFLRGYIRSYAKL). A DNA-binding region (H-T-H motif) is located at residues 30 to 49 (QQTIAERLCLKITTVRDIED). The helical; Signal-anchor for type II membrane protein transmembrane segment at 112 to 132 (WLMIITWLVVLVVLGLTGAWW) threads the bilayer. Residues 133 to 332 (WQNHQAQQAE…QVARLTLTAE (200 aa)) are Periplasmic-facing. Residues 149 to 225 (HASSMQSQTE…PSQANATQSQ (77 aa)) are disordered. 2 stretches are compositionally biased toward polar residues: residues 151–160 (SSMQSQTEGQ) and 168–182 (SAPQ…AATP). A compositionally biased stretch (low complexity) spans 190-225 (SATIAATPSTPPSSTTASSAAPSSQSPSQANATQSQ).

This sequence belongs to the RodZ family.

It is found in the cell inner membrane. Functionally, cytoskeletal protein that is involved in cell-shape control through regulation of the length of the long axis. This chain is Cytoskeleton protein RodZ, found in Pectobacterium atrosepticum (strain SCRI 1043 / ATCC BAA-672) (Erwinia carotovora subsp. atroseptica).